A 533-amino-acid polypeptide reads, in one-letter code: DNA-directed RNA polymerase III subunit RPC3 (533 aa).

Residues 162–181 (LVPDTDSSDRGPPPPAPTLV) are disordered. S194 is modified (phosphoserine). The interval 197–228 (GKGKRRRSSDEDATGEPKAKKPRYTDNKEPSP) is disordered. Positions 211–227 (GEPKAKKPRYTDNKEPS) are enriched in basic and acidic residues.

This sequence belongs to the eukaryotic RPC3/POLR3C RNA polymerase subunit family. In terms of assembly, component of the RNA polymerase III complex consisting of 17 subunits: a ten-subunit horseshoe-shaped catalytic core composed of POLR3A/RPC1, POLR3B/RPC2, POLR1C/RPAC1, POLR1D/RPAC2, POLR3K/RPC10, POLR2E/RPABC1, POLR2F/RPABC2, POLR2H/RPABC3, POLR2K/RPABC4 and POLR2L/RPABC5; a mobile stalk composed of two subunits POLR3H/RPC8 and CRCP/RPC9, protruding from the core and functioning primarily in transcription initiation; and additional subunits homologous to general transcription factors of the RNA polymerase II machinery, POLR3C/RPC3-POLR3F/RPC6-POLR3G/RPC7 heterotrimer required for transcription initiation and POLR3D/RPC4-POLR3E/RPC5 heterodimer involved in both transcription initiation and termination. Directly interacts with POLR3G/RPC7 and POLR3GL. Directly interacts with POLR3F/RPC6. Interacts with GTF3C4. As part of the RNA polymerase III complex, interacts with PKP2.

The protein localises to the nucleus. Its function is as follows. DNA-dependent RNA polymerase catalyzes the transcription of DNA into RNA using the four ribonucleoside triphosphates as substrates. Specific peripheric component of RNA polymerase III (Pol III) which synthesizes small non-coding RNAs including 5S rRNA, snRNAs, tRNAs and miRNAs from at least 500 distinct genomic loci. Part of POLR3C/RPC3-POLR3F/RPC6-POLR3G/RPC7 heterotrimer, coordinates the dynamics of Pol III stalk and clamp modules during the transition from apo to elongation state. Pol III plays a key role in sensing and limiting infection by intracellular bacteria and DNA viruses. Acts as a nuclear and cytosolic DNA sensor involved in innate immune response. Can sense non-self dsDNA that serves as template for transcription into dsRNA. The non-self RNA polymerase III transcripts, such as Epstein-Barr virus-encoded RNAs (EBERs) induce type I interferon and NF-kappa-B through the RIG-I pathway. Preferentially binds single-stranded DNA (ssDNA) in a sequence-independent manner. The sequence is that of DNA-directed RNA polymerase III subunit RPC3 from Mus musculus (Mouse).